Consider the following 342-residue polypeptide: Nucleoid-associated protein Shewmr7_2293 (342 aa).

Belongs to the YejK family.

Its subcellular location is the cytoplasm. It is found in the nucleoid. The chain is Nucleoid-associated protein Shewmr7_2293 from Shewanella sp. (strain MR-7).